A 633-amino-acid polypeptide reads, in one-letter code: DEAD-box ATP-dependent RNA helicase 27 (633 aa).

Positions 1–17 (MANLDMEQHSSENEEIK) are enriched in basic and acidic residues. Residues 1 to 147 (MANLDMEQHS…DKEEEKKLEE (147 aa)) form a disordered region. A coiled-coil region spans residues 2–34 (ANLDMEQHSSENEEIKKKKHKKRARDEAKKLKQ). Acidic residues-rich tracts occupy residues 37–47 (MEEEPDHEDGD) and 74–83 (DDGEDEAVAE). The segment covering 88–97 (KKKKKNKKLQ) has biased composition (basic residues). 2 stretches are compositionally biased toward acidic residues: residues 103 to 114 (NDEEDEVIAEEE) and 131 to 140 (SEEEEVEDKE). The stretch at 117-153 (KKKKKKQRKDTEAKSEEEEVEDKEEEKKLEETSIMTN) forms a coiled coil. A Q motif motif is present at residues 154–182 (KTFESLSLSDNTYKSIKEMGFARMTQIQA). The Helicase ATP-binding domain occupies 185–360 (IPPLMMGEDV…RVSLTSPVYI (176 aa)). 198-205 (ARTGSGKT) provides a ligand contact to ATP. The DEAD box signature appears at 308–311 (DEAD). Residues 386-534 (RLLFLLTFLK…EHEFEEKKLL (149 aa)) enclose the Helicase C-terminal domain. Positions 608–633 (KREPVNKFKRGRGGGRPGGKSKFERY) are disordered.

It belongs to the DEAD box helicase family. DDX18/HAS1 subfamily.

It catalyses the reaction ATP + H2O = ADP + phosphate + H(+). The polypeptide is DEAD-box ATP-dependent RNA helicase 27 (RH27) (Arabidopsis thaliana (Mouse-ear cress)).